Reading from the N-terminus, the 377-residue chain is Putative zinc metalloprotease Atu1380 (377 aa).

Residue His-29 participates in Zn(2+) binding. Glu-30 is a catalytic residue. Residue His-33 participates in Zn(2+) binding. Helical transmembrane passes span Val-118–Tyr-140, Leu-299–Met-321, and Val-351–Ser-373. The PDZ domain maps to Ala-129–Ala-202.

This sequence belongs to the peptidase M50B family. It depends on Zn(2+) as a cofactor.

The protein localises to the cell inner membrane. The protein is Putative zinc metalloprotease Atu1380 of Agrobacterium fabrum (strain C58 / ATCC 33970) (Agrobacterium tumefaciens (strain C58)).